The chain runs to 249 residues: Probable transcriptional regulatory protein aq_1575 (249 aa).

It belongs to the TACO1 family.

The protein localises to the cytoplasm. The polypeptide is Probable transcriptional regulatory protein aq_1575 (Aquifex aeolicus (strain VF5)).